Consider the following 402-residue polypeptide: Deacetylase Oant_2987 (402 aa).

The Zn(2+) site is built by His70, His72, Lys168, His201, His224, and Asp284. Lys168 is modified (N6-carboxylysine).

The protein belongs to the metallo-dependent hydrolases superfamily. Atu3266/EF_0837 deacetylase family. Zn(2+) serves as cofactor.

Esterase that catalyzes the deacetylation of acetyl-(R)-mandelate (in vitro). Can also hydrolyze acetyl glycolate, but with lower efficiency. Has very low N-acetyl-D-amino acid deacetylase activity with N-acetyl-D-serine and N-acetyl-D-threonine (in vitro). Theoretical substrate docking studies suggest that other N-acetylated amino acids may optimally occupy the active site and may in fact be the physiological substrates. This is Deacetylase Oant_2987 from Brucella anthropi (strain ATCC 49188 / DSM 6882 / CCUG 24695 / JCM 21032 / LMG 3331 / NBRC 15819 / NCTC 12168 / Alc 37) (Ochrobactrum anthropi).